A 91-amino-acid chain; its full sequence is PqqA binding protein (91 aa).

It belongs to the PqqD family. In terms of assembly, monomer. Interacts with PqqE.

The protein operates within cofactor biosynthesis; pyrroloquinoline quinone biosynthesis. Functions as a PqqA binding protein and presents PqqA to PqqE, in the pyrroloquinoline quinone (PQQ) biosynthetic pathway. The chain is PqqA binding protein from Pseudomonas fluorescens (strain ATCC BAA-477 / NRRL B-23932 / Pf-5).